The chain runs to 192 residues: Threonylcarbamoyl-AMP synthase (192 aa).

The 188-residue stretch at 5–192 (TTSVAEAAHC…DATTGRVIRD (188 aa)) folds into the YrdC-like domain.

Belongs to the SUA5 family. TsaC subfamily.

Its subcellular location is the cytoplasm. The catalysed reaction is L-threonine + hydrogencarbonate + ATP = L-threonylcarbamoyladenylate + diphosphate + H2O. Its function is as follows. Required for the formation of a threonylcarbamoyl group on adenosine at position 37 (t(6)A37) in tRNAs that read codons beginning with adenine. Catalyzes the conversion of L-threonine, HCO(3)(-)/CO(2) and ATP to give threonylcarbamoyl-AMP (TC-AMP) as the acyladenylate intermediate, with the release of diphosphate. The polypeptide is Threonylcarbamoyl-AMP synthase (Acinetobacter baylyi (strain ATCC 33305 / BD413 / ADP1)).